We begin with the raw amino-acid sequence, 274 residues long: uncharacterized protein (274 aa).

An N-terminal signal peptide occupies residues 1–21 (MRKLTLLPLLLIITGLLTVQA). Residues 249 to 266 (TSAFVILTASALIFIYLF) traverse the membrane as a helical segment.

The protein resides in the membrane. This is an uncharacterized protein from Archaeoglobus fulgidus (strain ATCC 49558 / DSM 4304 / JCM 9628 / NBRC 100126 / VC-16).